The chain runs to 228 residues: Putative adhesin A1I_01215 (228 aa).

Positions 1–22 (MKKLLLIAATSATVLSSALSFA) are cleaved as a signal peptide.

This is Putative adhesin A1I_01215 from Rickettsia bellii (strain OSU 85-389).